A 387-amino-acid chain; its full sequence is Exodeoxyribonuclease 7 large subunit (387 aa).

This sequence belongs to the XseA family. Heterooligomer composed of large and small subunits.

The protein resides in the cytoplasm. It carries out the reaction Exonucleolytic cleavage in either 5'- to 3'- or 3'- to 5'-direction to yield nucleoside 5'-phosphates.. In terms of biological role, bidirectionally degrades single-stranded DNA into large acid-insoluble oligonucleotides, which are then degraded further into small acid-soluble oligonucleotides. The sequence is that of Exodeoxyribonuclease 7 large subunit from Synechococcus sp. (strain CC9902).